The following is a 257-amino-acid chain: 3-deoxy-manno-octulosonate cytidylyltransferase (257 aa).

Belongs to the KdsB family.

The protein localises to the cytoplasm. The enzyme catalyses 3-deoxy-alpha-D-manno-oct-2-ulosonate + CTP = CMP-3-deoxy-beta-D-manno-octulosonate + diphosphate. It participates in nucleotide-sugar biosynthesis; CMP-3-deoxy-D-manno-octulosonate biosynthesis; CMP-3-deoxy-D-manno-octulosonate from 3-deoxy-D-manno-octulosonate and CTP: step 1/1. Its pathway is bacterial outer membrane biogenesis; lipopolysaccharide biosynthesis. In terms of biological role, activates KDO (a required 8-carbon sugar) for incorporation into bacterial lipopolysaccharide in Gram-negative bacteria. The protein is 3-deoxy-manno-octulosonate cytidylyltransferase of Halorhodospira halophila (strain DSM 244 / SL1) (Ectothiorhodospira halophila (strain DSM 244 / SL1)).